Reading from the N-terminus, the 179-residue chain is MKVLFKLPPSLRSELKKPVGELIEGDIPTPYLKVKDILTNEDPLVTVGDVVTENIMKVGLNPNLAIYDHKTERREYKPNIRSVEGVLITVKNPPGTITLPLLKAIKKAYSLLSHGKRVHIVVDGEEDLATIPAVLYAPIGTTVIYGQPKKGIVLIKVTNECKRRCAKIMRRMEVVRNGD.

6 residues coordinate GTP: Asp49, Val50, Val51, Asp68, Lys70, and Glu126.

It belongs to the GTP-dependent DPCK family.

It catalyses the reaction 3'-dephospho-CoA + GTP = GDP + CoA + H(+). It participates in cofactor biosynthesis; coenzyme A biosynthesis. Functionally, catalyzes the GTP-dependent phosphorylation of the 3'-hydroxyl group of dephosphocoenzyme A to form coenzyme A (CoA). The sequence is that of GTP-dependent dephospho-CoA kinase from Pyrococcus abyssi (strain GE5 / Orsay).